We begin with the raw amino-acid sequence, 335 residues long: Dihydroorotate dehydrogenase (quinone) (335 aa).

FMN contacts are provided by residues 58 to 62 (AGADK) and T82. K62 provides a ligand contact to substrate. 107–111 (NRNGF) contacts substrate. Residues N135 and N168 each contribute to the FMN site. N168 serves as a coordination point for substrate. The active-site Nucleophile is the S171. N173 provides a ligand contact to substrate. Residues K213 and G241 each contribute to the FMN site. Substrate is bound at residue 242–243 (NT). FMN is bound by residues G264, G293, and 314–315 (YS).

Belongs to the dihydroorotate dehydrogenase family. Type 2 subfamily. In terms of assembly, monomer. Requires FMN as cofactor.

The protein resides in the cell membrane. It catalyses the reaction (S)-dihydroorotate + a quinone = orotate + a quinol. It functions in the pathway pyrimidine metabolism; UMP biosynthesis via de novo pathway; orotate from (S)-dihydroorotate (quinone route): step 1/1. Its function is as follows. Catalyzes the conversion of dihydroorotate to orotate with quinone as electron acceptor. The sequence is that of Dihydroorotate dehydrogenase (quinone) from Haemophilus ducreyi (strain 35000HP / ATCC 700724).